The following is a 139-amino-acid chain: Cellular retinoic acid-binding protein 2 (139 aa).

Positions 21–31 (KALGVNMMMRK) match the Nuclear localization signal motif. A Glycyl lysine isopeptide (Lys-Gly) (interchain with G-Cter in SUMO) cross-link involves residue lysine 103. An all-trans-retinoate-binding site is contributed by 134–136 (RVY).

Belongs to the calycin superfamily. Fatty-acid binding protein (FABP) family. Interacts with importin alpha, RXR and RARA. Sumoylated in response to retinoic acid binding, sumoylation is critical for dissociation from ER and subsequent nuclear translocation.

It is found in the cytoplasm. Its subcellular location is the endoplasmic reticulum. The protein resides in the nucleus. Functionally, transports retinoic acid to the nucleus. Regulates the access of retinoic acid to the nuclear retinoic acid receptors. The polypeptide is Cellular retinoic acid-binding protein 2 (Crabp2) (Rattus norvegicus (Rat)).